The chain runs to 402 residues: 3-dehydroquinate synthase (402 aa).

Belongs to the archaeal-type DHQ synthase family.

It catalyses the reaction 2-amino-2,3,7-trideoxy-D-lyxo-hept-6-ulosonate + NAD(+) + H2O = 3-dehydroquinate + NH4(+) + NADH + H(+). Its function is as follows. Catalyzes the oxidative deamination and cyclization of 2-amino-3,7-dideoxy-D-threo-hept-6-ulosonic acid (ADH) to yield 3-dehydroquinate (DHQ), which is fed into the canonical shikimic pathway of aromatic amino acid biosynthesis. The sequence is that of 3-dehydroquinate synthase from Methanopyrus kandleri (strain AV19 / DSM 6324 / JCM 9639 / NBRC 100938).